A 171-amino-acid chain; its full sequence is Peptide deformylase (171 aa).

Fe cation-binding residues include cysteine 91 and histidine 133. The active site involves glutamate 134. Histidine 137 provides a ligand contact to Fe cation.

Belongs to the polypeptide deformylase family. Fe(2+) is required as a cofactor.

It catalyses the reaction N-terminal N-formyl-L-methionyl-[peptide] + H2O = N-terminal L-methionyl-[peptide] + formate. In terms of biological role, removes the formyl group from the N-terminal Met of newly synthesized proteins. Requires at least a dipeptide for an efficient rate of reaction. N-terminal L-methionine is a prerequisite for activity but the enzyme has broad specificity at other positions. This Hamiltonella defensa subsp. Acyrthosiphon pisum (strain 5AT) protein is Peptide deformylase.